Reading from the N-terminus, the 269-residue chain is 5'-methylthioadenosine/S-adenosylhomocysteine nucleosidase (269 aa).

Catalysis depends on Glu-12, which acts as the Proton acceptor. Substrate-binding positions include Gly-77, Val-174, and 194-195 (ME). The active-site Proton donor is Asp-218.

It belongs to the PNP/UDP phosphorylase family. MtnN subfamily.

It catalyses the reaction S-adenosyl-L-homocysteine + H2O = S-(5-deoxy-D-ribos-5-yl)-L-homocysteine + adenine. The catalysed reaction is S-methyl-5'-thioadenosine + H2O = 5-(methylsulfanyl)-D-ribose + adenine. It carries out the reaction 5'-deoxyadenosine + H2O = 5-deoxy-D-ribose + adenine. It functions in the pathway amino-acid biosynthesis; L-methionine biosynthesis via salvage pathway; S-methyl-5-thio-alpha-D-ribose 1-phosphate from S-methyl-5'-thioadenosine (hydrolase route): step 1/2. Catalyzes the irreversible cleavage of the glycosidic bond in both 5'-methylthioadenosine (MTA) and S-adenosylhomocysteine (SAH/AdoHcy) to adenine and the corresponding thioribose, 5'-methylthioribose and S-ribosylhomocysteine, respectively. Also cleaves 5'-deoxyadenosine, a toxic by-product of radical S-adenosylmethionine (SAM) enzymes, into 5-deoxyribose and adenine. This Treponema pallidum (strain Nichols) protein is 5'-methylthioadenosine/S-adenosylhomocysteine nucleosidase (mtnN).